The primary structure comprises 217 residues: Nuclear transcription factor Y subunit C-3 (217 aa).

Over residues 1-28 (MDQQGQSSAMNYGSNPYQTNAMTTTPTG) the composition is skewed to polar residues. Disordered stretches follow at residues 1–29 (MDQQ…PTGS) and 198–217 (PYMG…DPDN).

It belongs to the NFYC/HAP5 subunit family. Heterotrimeric transcription factor composed of three components, NF-YA, NF-YB and NF-YC. NF-YB and NF-YC must interact and dimerize for NF-YA association and DNA binding. In terms of tissue distribution, ubiquitous.

Its subcellular location is the nucleus. Its function is as follows. Stimulates the transcription of various genes by recognizing and binding to a CCAAT motif in promoters. In Arabidopsis thaliana (Mouse-ear cress), this protein is Nuclear transcription factor Y subunit C-3 (NFYC3).